The chain runs to 152 residues: tRNA-specific adenosine deaminase (152 aa).

The CMP/dCMP-type deaminase domain maps to 2-111; that stretch reads AERTHFMELA…AQDPKGGAVE (110 aa). H53 contributes to the Zn(2+) binding site. Residue E55 is the Proton donor of the active site. Positions 83 and 86 each coordinate Zn(2+).

Belongs to the cytidine and deoxycytidylate deaminase family. In terms of assembly, homodimer. Zn(2+) serves as cofactor.

The enzyme catalyses adenosine(34) in tRNA + H2O + H(+) = inosine(34) in tRNA + NH4(+). Functionally, catalyzes the deamination of adenosine to inosine at the wobble position 34 of tRNA(Arg2). The protein is tRNA-specific adenosine deaminase of Agrobacterium fabrum (strain C58 / ATCC 33970) (Agrobacterium tumefaciens (strain C58)).